Consider the following 268-residue polypeptide: tRNA pseudouridine synthase A (268 aa).

The active-site Nucleophile is Asp-52. Tyr-110 is a substrate binding site.

It belongs to the tRNA pseudouridine synthase TruA family. As to quaternary structure, homodimer.

The catalysed reaction is uridine(38/39/40) in tRNA = pseudouridine(38/39/40) in tRNA. Formation of pseudouridine at positions 38, 39 and 40 in the anticodon stem and loop of transfer RNAs. This chain is tRNA pseudouridine synthase A, found in Prochlorococcus marinus (strain MIT 9301).